The following is a 232-amino-acid chain: Ribonuclease P protein component 3 (232 aa).

This sequence belongs to the eukaryotic/archaeal RNase P protein component 3 family. As to quaternary structure, consists of a catalytic RNA component and at least 4-5 protein subunits.

It localises to the cytoplasm. It carries out the reaction Endonucleolytic cleavage of RNA, removing 5'-extranucleotides from tRNA precursor.. Part of ribonuclease P, a protein complex that generates mature tRNA molecules by cleaving their 5'-ends. The sequence is that of Ribonuclease P protein component 3 from Halobacterium salinarum (strain ATCC 29341 / DSM 671 / R1).